We begin with the raw amino-acid sequence, 245 residues long: Homeobox protein Hox-A4a (245 aa).

Positions 34 to 99 (DYYERPKDPG…HGPRLTTESC (66 aa)) are disordered. Over residues 35-51 (YYERPKDPGFPHHEEAS) the composition is skewed to basic and acidic residues. Composition is skewed to polar residues over residues 53–73 (PRSN…NDLN) and 82–99 (QPQS…TESC). Residues 126–131 (VYPWMK) carry the Antp-type hexapeptide motif. Positions 147-206 (PKRSRTAYTRQQALELEKEFHFNRYLTRRRRVEIAHTMCLSERQVKIWFQNRRMKWKKDH) form a DNA-binding region, homeobox. Residues 205–245 (DHKLPNTKIRSSSSAPSNHHVKTDATQQQQTLLPTPCSSNL) form a disordered region. Residues 212–221 (KIRSSSSAPS) show a composition bias toward polar residues. The span at 230–245 (TQQQQTLLPTPCSSNL) shows a compositional bias: low complexity.

Belongs to the Antp homeobox family. Deformed subfamily.

The protein localises to the nucleus. Its function is as follows. Sequence-specific transcription factor which is part of a developmental regulatory system that provides cells with specific positional identities on the anterior-posterior axis. The polypeptide is Homeobox protein Hox-A4a (hoxa4a) (Danio rerio (Zebrafish)).